We begin with the raw amino-acid sequence, 467 residues long: UPF0236 protein TTE0610/TTE0881/TTE1053/TTE2432 (467 aa).

This sequence belongs to the UPF0236 family.

In Caldanaerobacter subterraneus subsp. tengcongensis (strain DSM 15242 / JCM 11007 / NBRC 100824 / MB4) (Thermoanaerobacter tengcongensis), this protein is UPF0236 protein TTE0610/TTE0881/TTE1053/TTE2432.